A 127-amino-acid polypeptide reads, in one-letter code: Urotensin-2 (127 aa).

The signal sequence occupies residues Met-1–Cys-16. The propeptide occupies Ser-17–Phe-111. Cys-121 and Cys-126 are joined by a disulfide.

This sequence belongs to the urotensin-2 family. Central nervous system. Spinal cord.

The protein resides in the secreted. Its function is as follows. Involved in smooth muscle stimulating and ion mobilizing activities. It has a suggested role as a corticotropin-releasing factor. The chain is Urotensin-2 (UTS2) from Pelophylax ridibundus (Marsh frog).